The chain runs to 688 residues: DNA topoisomerase 1 (688 aa).

The 111-residue stretch at 3-113 (ENLVIVESPA…TENRVVFNEI (111 aa)) folds into the Toprim domain. The Mg(2+) site is built by Glu9 and Asp82. The Topo IA-type catalytic domain occupies 129–556 (EMELVDAQQA…FYSSFKQDVE (428 aa)). The interval 163 to 168 (SAGRVQ) is interaction with DNA. Catalysis depends on Tyr298, which acts as the O-(5'-phospho-DNA)-tyrosine intermediate. The disordered stretch occupies residues 322–349 (YGNDYTSNRKSKGQGDQDAHEAIRPSST). Over residues 334-344 (GQGDQDAHEAI) the composition is skewed to basic and acidic residues. 3 C4-type zinc fingers span residues 576-602 (CEVCGSPMVIKMGRYGKFMACSNFPDC), 616-644 (CPKCKEGDVVERKSKKNRIFYGCSKYPEC), and 657-680 (CPKCEHYLVEKKQGRKSQVVCSNC).

The protein belongs to the type IA topoisomerase family. In terms of assembly, monomer. It depends on Mg(2+) as a cofactor.

The catalysed reaction is ATP-independent breakage of single-stranded DNA, followed by passage and rejoining.. Its function is as follows. Releases the supercoiling and torsional tension of DNA, which is introduced during the DNA replication and transcription, by transiently cleaving and rejoining one strand of the DNA duplex. Introduces a single-strand break via transesterification at a target site in duplex DNA. The scissile phosphodiester is attacked by the catalytic tyrosine of the enzyme, resulting in the formation of a DNA-(5'-phosphotyrosyl)-enzyme intermediate and the expulsion of a 3'-OH DNA strand. The free DNA strand then undergoes passage around the unbroken strand, thus removing DNA supercoils. Finally, in the religation step, the DNA 3'-OH attacks the covalent intermediate to expel the active-site tyrosine and restore the DNA phosphodiester backbone. This chain is DNA topoisomerase 1, found in Staphylococcus saprophyticus subsp. saprophyticus (strain ATCC 15305 / DSM 20229 / NCIMB 8711 / NCTC 7292 / S-41).